Reading from the N-terminus, the 311-residue chain is Probable manganese-dependent inorganic pyrophosphatase (311 aa).

The Mn(2+) site is built by His9, Asp13, Asp15, Asp75, His97, and Asp149.

The protein belongs to the PPase class C family. Mn(2+) is required as a cofactor.

Its subcellular location is the cytoplasm. It catalyses the reaction diphosphate + H2O = 2 phosphate + H(+). The protein is Probable manganese-dependent inorganic pyrophosphatase of Lactobacillus johnsonii (strain CNCM I-12250 / La1 / NCC 533).